We begin with the raw amino-acid sequence, 355 residues long: Ataxin-3-like protein (355 aa).

In terms of domain architecture, Josephin spans 1 to 180 (MDFIFHEKQE…DCEADQLLQI (180 aa)). The Nucleophile role is filled by C14. The active-site Proton acceptor is H119. The active site involves N134. Disordered stretches follow at residues 209-230 (LEKVSEESDESGTSDQDEEDFQ) and 253-331 (LSMQ…DISE). Acidic residues predominate over residues 215–228 (ESDESGTSDQDEED). UIM domains are found at residues 224–243 (QDEEDFQRALELSRQETNRE) and 244–258 (DEHLRSTIELSMQGS). A compositionally biased stretch (polar residues) spans 253-276 (LSMQGSSGNTSQDLPKTSCVTPAS). The segment covering 278–293 (QPKKIKEDYFEKHQQE) has biased composition (basic and acidic residues).

In terms of tissue distribution, widely expressed.

It is found in the nucleus. It carries out the reaction Thiol-dependent hydrolysis of ester, thioester, amide, peptide and isopeptide bonds formed by the C-terminal Gly of ubiquitin (a 76-residue protein attached to proteins as an intracellular targeting signal).. Functionally, deubiquitinating enzyme that cleaves both 'Lys-48'-linked and 'Lys-63'-linked poly-ubiquitin chains (in vitro). Acts as a deubiquitinating enzyme for the transcription factor KLF5, playing a role in the regulation of KLF5 stability. This Homo sapiens (Human) protein is Ataxin-3-like protein.